A 66-amino-acid chain; its full sequence is Cold shock-like protein CspLB (66 aa).

Residues 4–63 (GTVKWFNSEKGFGFIEVEGGDDVFVHFSAIEGEGFKTLDEGQSVEFEIVEGQRGPQAEKV) form the CSD domain.

Homodimer.

Its subcellular location is the cytoplasm. The protein is Cold shock-like protein CspLB (cspLB) of Listeria monocytogenes serovar 1/2a (strain ATCC BAA-679 / EGD-e).